We begin with the raw amino-acid sequence, 185 residues long: Ribosome-recycling factor (185 aa).

A disordered region spans residues 144–164; the sequence is KEGEAGEDEVGRAEKDLDKTT.

Belongs to the RRF family.

It localises to the cytoplasm. Functionally, responsible for the release of ribosomes from messenger RNA at the termination of protein biosynthesis. May increase the efficiency of translation by recycling ribosomes from one round of translation to another. This chain is Ribosome-recycling factor, found in Mycobacterium tuberculosis (strain CDC 1551 / Oshkosh).